A 291-amino-acid polypeptide reads, in one-letter code: MANNMLHRYLFKDLSVRGELVQLDDTYQQMISSQEYPAAVQHLIGELLVATSLLTATLKFEGSITLQLQGNGPVSLVVINGDNNQQVRGVARWKGDIADDASLHDMLGKGHLVITIEPKQGERYQGVVGLEGDTLAQVLEGYFERSEQLKTRLWIRVGKHDGKACAAGMLLQIVPDGKGSAEDFEHLEQLTNTIKDEELFALPAEELLYRLYNQETVQLFTPQQISFRCGCSRERSAAAIVTVAREEINDILAQDGAVALHCDYCGTTYSFDSAQVAELYAPSSANGSTLH.

2 disulfides stabilise this stretch: C229-C231 and C262-C265.

The protein belongs to the HSP33 family. Under oxidizing conditions two disulfide bonds are formed involving the reactive cysteines. Under reducing conditions zinc is bound to the reactive cysteines and the protein is inactive.

Its subcellular location is the cytoplasm. In terms of biological role, redox regulated molecular chaperone. Protects both thermally unfolding and oxidatively damaged proteins from irreversible aggregation. Plays an important role in the bacterial defense system toward oxidative stress. The chain is 33 kDa chaperonin from Vibrio cholerae serotype O1 (strain ATCC 39315 / El Tor Inaba N16961).